Reading from the N-terminus, the 256-residue chain is Type III pantothenate kinase (256 aa).

Aspartate 6 to tyrosine 13 contributes to the ATP binding site. Substrate is bound by residues tyrosine 99 and glycine 106–arginine 109. Aspartate 108 (proton acceptor) is an active-site residue. Residue aspartate 129 participates in K(+) binding. Threonine 132 lines the ATP pocket. Threonine 184 provides a ligand contact to substrate.

Belongs to the type III pantothenate kinase family. As to quaternary structure, homodimer. NH4(+) serves as cofactor. Requires K(+) as cofactor.

It localises to the cytoplasm. It carries out the reaction (R)-pantothenate + ATP = (R)-4'-phosphopantothenate + ADP + H(+). It functions in the pathway cofactor biosynthesis; coenzyme A biosynthesis; CoA from (R)-pantothenate: step 1/5. In terms of biological role, catalyzes the phosphorylation of pantothenate (Pan), the first step in CoA biosynthesis. In Legionella pneumophila (strain Corby), this protein is Type III pantothenate kinase.